Consider the following 211-residue polypeptide: Endo-1,4-beta-xylanase 5 (211 aa).

Residues 1-16 (MKVTAAFASLLLTAFA) form the signal peptide. One can recognise a GH11 domain in the interval 19–210 (APEPVLVSRS…GVGSASVTIS (192 aa)). The active-site Nucleophile is Glu-106. The active-site Proton donor is Glu-197.

It belongs to the glycosyl hydrolase 11 (cellulase G) family.

The protein resides in the secreted. The catalysed reaction is Endohydrolysis of (1-&gt;4)-beta-D-xylosidic linkages in xylans.. The protein operates within glycan degradation; xylan degradation. In terms of biological role, endo-1,4-beta-xylanase involved in the hydrolysis of xylan, a major structural heterogeneous polysaccharide found in plant biomass representing the second most abundant polysaccharide in the biosphere, after cellulose. This is Endo-1,4-beta-xylanase 5 (XYN5) from Aspergillus niger.